The following is a 77-amino-acid chain: MQKLTILLLVAAVLMSTQALIKGGGEKRPKEKIRFLSKRKTTAERWWEGECRGWSNGCTTNSDCCSNNCDGTFCKLW.

The signal sequence occupies residues 1 to 19 (MQKLTILLLVAAVLMSTQA). Positions 20–37 (LIKGGGEKRPKEKIRFLS) are excised as a propeptide. Cystine bridges form between cysteine 51–cysteine 65, cysteine 58–cysteine 69, and cysteine 64–cysteine 74.

The protein belongs to the conotoxin O2 superfamily. Expressed by the venom duct.

The protein resides in the secreted. The sequence is that of Conotoxin VnMEKL-023 from Conus ventricosus (Mediterranean cone).